Consider the following 250-residue polypeptide: tRNA (guanine-N(7)-)-methyltransferase (250 aa).

Positions 79, 104, 131, and 154 each coordinate S-adenosyl-L-methionine. D154 is an active-site residue. Substrate is bound by residues K158, D190, and 228–231 (TKFE).

The protein belongs to the class I-like SAM-binding methyltransferase superfamily. TrmB family.

It catalyses the reaction guanosine(46) in tRNA + S-adenosyl-L-methionine = N(7)-methylguanosine(46) in tRNA + S-adenosyl-L-homocysteine. The protein operates within tRNA modification; N(7)-methylguanine-tRNA biosynthesis. Its function is as follows. Catalyzes the formation of N(7)-methylguanine at position 46 (m7G46) in tRNA. In Actinobacillus pleuropneumoniae serotype 5b (strain L20), this protein is tRNA (guanine-N(7)-)-methyltransferase.